A 460-amino-acid polypeptide reads, in one-letter code: tRNA (guanine(37)-N(1))-methyltransferase (460 aa).

Residues His204, 243 to 244 (DL), 271 to 272 (DA), and Asn292 each bind S-adenosyl-L-methionine. A compositionally biased stretch (low complexity) spans 390 to 428 (ASTTTTPTTSNTNTSTTTSTTSTSTTTTESTNTNNSANN). A disordered region spans residues 390-460 (ASTTTTPTTS…SIDTNKKLKN (71 aa)). Acidic residues predominate over residues 442 to 451 (DSNETNETDS).

It belongs to the class I-like SAM-binding methyltransferase superfamily. TRM5/TYW2 family. In terms of assembly, monomer.

The protein resides in the mitochondrion matrix. It localises to the nucleus. The protein localises to the cytoplasm. The catalysed reaction is guanosine(37) in tRNA + S-adenosyl-L-methionine = N(1)-methylguanosine(37) in tRNA + S-adenosyl-L-homocysteine + H(+). Specifically methylates the N1 position of guanosine-37 in various cytoplasmic and mitochondrial tRNAs. Methylation is not dependent on the nature of the nucleoside 5' of the target nucleoside. This is the first step in the biosynthesis of wybutosine (yW), a modified base adjacent to the anticodon of tRNAs and required for accurate decoding. This is tRNA (guanine(37)-N(1))-methyltransferase (trmt5) from Dictyostelium discoideum (Social amoeba).